The following is a 250-amino-acid chain: tRNA-splicing endonuclease subunit Sen2-2 (250 aa).

Catalysis depends on residues Y148, H156, and K189. Positions 225–250 (SPELSREDQSTNSKQHVPNVSNLNTL) are disordered. A compositionally biased stretch (polar residues) spans 234 to 250 (STNSKQHVPNVSNLNTL).

It belongs to the tRNA-intron endonuclease family. TRNA splicing endonuclease is a heterotetramer composed of SEN2, SEN15, SEN34/LENG5 and SEN54.

It is found in the nucleus. The catalysed reaction is pretRNA = a 3'-half-tRNA molecule with a 5'-OH end + a 5'-half-tRNA molecule with a 2',3'-cyclic phosphate end + an intron with a 2',3'-cyclic phosphate and a 5'-hydroxyl terminus.. Constitutes one of the two catalytic subunit of the tRNA-splicing endonuclease complex, a complex responsible for identification and cleavage of the splice sites in pre-tRNA. It cleaves pre-tRNA at the 5'- and 3'-splice sites to release the intron. The products are an intron and two tRNA half-molecules bearing 2',3'-cyclic phosphate and 5'-OH termini. There are no conserved sequences at the splice sites, but the intron is invariably located at the same site in the gene, placing the splice sites an invariant distance from the constant structural features of the tRNA body. Probably carries the active site for 5'-splice site cleavage. This Arabidopsis thaliana (Mouse-ear cress) protein is tRNA-splicing endonuclease subunit Sen2-2 (SEN2).